A 141-amino-acid chain; its full sequence is Large ribosomal subunit protein uL11 (141 aa).

The protein belongs to the universal ribosomal protein uL11 family. Part of the ribosomal stalk of the 50S ribosomal subunit. Interacts with L10 and the large rRNA to form the base of the stalk. L10 forms an elongated spine to which L12 dimers bind in a sequential fashion forming a multimeric L10(L12)X complex. Post-translationally, one or more lysine residues are methylated.

In terms of biological role, forms part of the ribosomal stalk which helps the ribosome interact with GTP-bound translation factors. In Campylobacter fetus subsp. fetus (strain 82-40), this protein is Large ribosomal subunit protein uL11.